The primary structure comprises 336 residues: Transmembrane protein 120A (336 aa).

At 1–131 (MNSPALQDCV…KQSKFAYKDE (131 aa)) the chain is on the cytoplasmic side. K129 is a CoA binding site. The helical transmembrane segment at 132–151 (YEKFKLYLTMILMVLSFICR) threads the bilayer. Residues 152–157 (FVLNSR) lie on the Extracellular side of the membrane. The helical transmembrane segment at 158-176 (VTDAVFNFLLVWYYCTLTI) threads the bilayer. Residues 177–189 (RESILINNGSRIK) are Cytoplasmic-facing. S186 and R187 together coordinate CoA. A helical transmembrane segment spans residues 190-208 (GWWVLNHYISTFLSGVMLT). Topologically, residues 209–217 (WPDGLMYQM) are extracellular. The helical transmembrane segment at 218–239 (FRNQFLSFSMYQSFVQFLQYYY) threads the bilayer. Q236, Y239, and Q240 together coordinate CoA. Residues 240 to 269 (QSGCLYRLRALGERHNMDLTVEGFQSWMWR) are Cytoplasmic-facing. Residues 270-293 (GLTFLLPFLFFGQFWQLYNAITLF) traverse the membrane as a helical segment. The Extracellular segment spans residues 294–303 (KLARHPECKE). The chain crosses the membrane as a helical span at residues 304 to 329 (WQVIMCGLPFLVHFLGNFFTTLRVVH). Topologically, residues 330-336 (QKFQKQN) are cytoplasmic. K331 lines the CoA pocket.

It belongs to the TMEM120 family. Homodimer.

Its subcellular location is the cell membrane. The protein resides in the nucleus inner membrane. It localises to the endoplasmic reticulum. Its function is as follows. Multifunctional protein involved in mechanosensation, and plays an essential role in lipid metabolism. May function as a potential ion channel involved in sensing mechanical stimuli. TMEM120A is structurally similar to a lipid-modifying enzyme, ELOVL7, and contains a bound coenzyme A molecule, which suggests it might function as an enzyme in lipid metabolism. This chain is Transmembrane protein 120A, found in Xenopus tropicalis (Western clawed frog).